The following is a 476-amino-acid chain: Serine/threonine-protein kinase sax-1 (476 aa).

The Protein kinase domain occupies 87–381 (FESLKVIGRG…LDEIKQCPFV (295 aa)). Residues 93 to 101 (IGRGAFGEV) and K116 each bind ATP. D210 (proton acceptor) is an active-site residue. The 71-residue stretch at 382–452 (KRIDWNHIRE…KRFDGLTQKM (71 aa)) folds into the AGC-kinase C-terminal domain.

It belongs to the protein kinase superfamily. AGC Ser/Thr protein kinase family. Mg(2+) serves as cofactor. Widely expressed in embryonic and larval neurons that contribute axons to the nerve ring and in hypodermal cells, including lateral seam cells. Also displays a punctate localization in muscle.

It is found in the cytoplasm. Its subcellular location is the nucleus. The enzyme catalyses L-seryl-[protein] + ATP = O-phospho-L-seryl-[protein] + ADP + H(+). The catalysed reaction is L-threonyl-[protein] + ATP = O-phospho-L-threonyl-[protein] + ADP + H(+). Its function is as follows. Acts with sax-2 to restrict the growth of both primary and secondary neurites. Regulates mechanosensory tiling by controlling the termination point of sensory dendrites. This Caenorhabditis elegans protein is Serine/threonine-protein kinase sax-1.